The sequence spans 86 residues: OMEGA-stichotoxin-Shd4a (86 aa).

A signal peptide spans 1 to 23 (MASFRTLFACVVILCCVLWSSMA). Positions 24–36 (RYGEDMEVETEMN) are excised as a propeptide. Residues 40–82 (EGVRCTGQHASSFCLNGGTCRHIASLGEYYCICPGDYTGHRCD) enclose the EGF-like domain. 3 disulfides stabilise this stretch: Cys-44-Cys-59, Cys-53-Cys-70, and Cys-72-Cys-81.

Belongs to the EGF domain peptide family.

It is found in the secreted. It localises to the nematocyst. Functionally, has both toxic and EGF activity. Its EGF activity consists of rounding cells (morphological change) and inducing tyrosine phosphorylation of the EGFR in A431 cells, but with a lower potency that human EGF. This is OMEGA-stichotoxin-Shd4a from Stichodactyla haddoni (Saddle carpet anemone).